We begin with the raw amino-acid sequence, 275 residues long: Polyamine aminopropyltransferase (275 aa).

A PABS domain is found at 2–235; that stretch reads ELWFTEKQTK…GLWTFTIGSK (234 aa). An S-methyl-5'-thioadenosine-binding site is contributed by Gln-31. Spermidine-binding residues include His-62 and Asp-86. S-methyl-5'-thioadenosine is bound by residues Glu-106 and 137 to 138; that span reads DG. Asp-155 (proton acceptor) is an active-site residue. 155–158 lines the spermidine pocket; the sequence is DSTE. Pro-162 lines the S-methyl-5'-thioadenosine pocket.

This sequence belongs to the spermidine/spermine synthase family. In terms of assembly, homodimer or homotetramer.

It is found in the cytoplasm. It catalyses the reaction S-adenosyl 3-(methylsulfanyl)propylamine + putrescine = S-methyl-5'-thioadenosine + spermidine + H(+). The protein operates within amine and polyamine biosynthesis; spermidine biosynthesis; spermidine from putrescine: step 1/1. Functionally, catalyzes the irreversible transfer of a propylamine group from the amino donor S-adenosylmethioninamine (decarboxy-AdoMet) to putrescine (1,4-diaminobutane) to yield spermidine. In Bacillus mycoides (strain KBAB4) (Bacillus weihenstephanensis), this protein is Polyamine aminopropyltransferase.